Consider the following 397-residue polypeptide: LIM/homeobox protein Lhx9 (397 aa).

LIM zinc-binding domains lie at 69–130 (ALCA…RFSV) and 131–193 (QRCA…LLQG). Disordered stretches follow at residues 248–272 (ENEA…RMRT), 330–364 (ENGG…TLTD), and 378–397 (SNMD…TNLF). A DNA-binding region (homeobox) is located at residues 267-326 (TKRMRTSFKHHQLRTMKSYFAINHNPDAKDLKQLAQKTGLTKRVLQVWFQNARAKFRRNL). Residues 353-364 (LTPPGTATTLTD) are compositionally biased toward low complexity.

As to quaternary structure, interacts with LDB1 and LDB2.

It is found in the nucleus. In terms of biological role, involved in gonadal development. The polypeptide is LIM/homeobox protein Lhx9 (LHX9) (Homo sapiens (Human)).